The sequence spans 265 residues: Cytosolic Fe-S cluster assembly factor NUBP2 homolog (265 aa).

Residue 22–29 (GKGGVGKS) coordinates ATP. Positions 196 and 199 each coordinate [4Fe-4S] cluster.

This sequence belongs to the Mrp/NBP35 ATP-binding proteins family. NUBP2/CFD1 subfamily. As to quaternary structure, heterotetramer of 2 NUBP1 and 2 NUBP2 chains. It depends on [4Fe-4S] cluster as a cofactor.

It localises to the cytoplasm. Component of the cytosolic iron-sulfur (Fe/S) protein assembly (CIA) machinery. Required for maturation of extramitochondrial Fe-S proteins. The NUBP1-NUBP2 heterotetramer forms a Fe-S scaffold complex, mediating the de novo assembly of an Fe-S cluster and its transfer to target apoproteins. This chain is Cytosolic Fe-S cluster assembly factor NUBP2 homolog, found in Trichoplax adhaerens (Trichoplax reptans).